Reading from the N-terminus, the 234-residue chain is Ubiquinone biosynthesis O-methyltransferase (234 aa).

S-adenosyl-L-methionine contacts are provided by Arg36, Gly56, Asp77, and Met125.

Belongs to the methyltransferase superfamily. UbiG/COQ3 family.

The catalysed reaction is a 3-demethylubiquinol + S-adenosyl-L-methionine = a ubiquinol + S-adenosyl-L-homocysteine + H(+). The enzyme catalyses a 3-(all-trans-polyprenyl)benzene-1,2-diol + S-adenosyl-L-methionine = a 2-methoxy-6-(all-trans-polyprenyl)phenol + S-adenosyl-L-homocysteine + H(+). It functions in the pathway cofactor biosynthesis; ubiquinone biosynthesis. In terms of biological role, O-methyltransferase that catalyzes the 2 O-methylation steps in the ubiquinone biosynthetic pathway. The protein is Ubiquinone biosynthesis O-methyltransferase of Actinobacillus pleuropneumoniae serotype 5b (strain L20).